A 1013-amino-acid polypeptide reads, in one-letter code: GPI ethanolamine phosphate transferase 3 (1013 aa).

A helical membrane pass occupies residues 41 to 61; sequence TLYIFLYSALAALQFIAIAFF. N-linked (GlcNAc...) asparagine glycosylation is found at N184, N205, N336, N399, and N423. 3 helical membrane passes run 447-467, 484-504, and 515-535; these read YYSI…LITI, VPTI…VFYV, and LWAS…VPIF. N-linked (GlcNAc...) asparagine glycosylation occurs at N539. The next 4 membrane-spanning stretches (helical) occupy residues 558–578, 582–602, 643–663, and 682–702; these read VAAF…FTIW, IVSF…VFLP, IVGG…SLIT, and NYSF…PACI. N-linked (GlcNAc...) asparagine glycosylation is present at N707. A helical transmembrane segment spans residues 715–735; that stretch reads AAPIWIGMLMKSILFVNFIYW. Residues N742, N750, and N755 are each glycosylated (N-linked (GlcNAc...) asparagine). The next 7 helical transmembrane spans lie at 761-781, 802-822, 825-845, 868-888, 899-919, 943-963, and 977-997; these read IVVG…PLCI, NAYG…ILLF, PLAQ…LEIF, FFST…GFIL, LGIV…VALL, GMLL…VTNF, and FMFA…ITIA.

It belongs to the PIGG/PIGN/PIGO family. PIGO subfamily.

It is found in the endoplasmic reticulum membrane. The protein operates within glycolipid biosynthesis; glycosylphosphatidylinositol-anchor biosynthesis. Its function is as follows. Involved in glycosylphosphatidylinositol-anchor biosynthesis. Transfers ethanolamine phosphate to the GPI third mannose which links the GPI-anchor to the C-terminus of the proteins by an amide bond. Involved in cell wall biosynthesis. In Eremothecium gossypii (strain ATCC 10895 / CBS 109.51 / FGSC 9923 / NRRL Y-1056) (Yeast), this protein is GPI ethanolamine phosphate transferase 3 (GPI13).